We begin with the raw amino-acid sequence, 107 residues long: Small ribosomal subunit protein uS17 (107 aa).

It belongs to the universal ribosomal protein uS17 family. Part of the 30S ribosomal subunit.

Its function is as follows. One of the primary rRNA binding proteins, it binds specifically to the 5'-end of 16S ribosomal RNA. This is Small ribosomal subunit protein uS17 from Thermotoga maritima (strain ATCC 43589 / DSM 3109 / JCM 10099 / NBRC 100826 / MSB8).